Here is a 261-residue protein sequence, read N- to C-terminus: Undecaprenyl-diphosphatase (261 aa).

A run of 7 helical transmembrane segments spans residues 38-58 (RSDF…TFVF), 75-95 (RDYV…GLAV), 106-126 (IQPI…AESV), 136-156 (VTWS…VFPG), 181-201 (FSFL…CFEL), 217-237 (VAFV…LGYI), and 241-261 (SFAP…TWLT).

This sequence belongs to the UppP family.

It localises to the cell inner membrane. The catalysed reaction is di-trans,octa-cis-undecaprenyl diphosphate + H2O = di-trans,octa-cis-undecaprenyl phosphate + phosphate + H(+). Its function is as follows. Catalyzes the dephosphorylation of undecaprenyl diphosphate (UPP). Confers resistance to bacitracin. The chain is Undecaprenyl-diphosphatase from Xylella fastidiosa (strain 9a5c).